A 246-amino-acid chain; its full sequence is Flavin-dependent thymidylate synthase (246 aa).

The ThyX domain maps to 17 to 241 (ITVELVKSAA…PLTHAAFNAN (225 aa)). FAD is bound by residues S69, 92-94 (RHR), and E101. DUMP is bound by residues 89 to 92 (EFMR), 101 to 105 (EESGR), and R173. Residues 92–103 (RHRVGWSYNEES) carry the ThyX motif motif. FAD-binding positions include 189-191 (NAR) and H195. A dUMP-binding site is contributed by R200. The active-site Involved in ionization of N3 of dUMP, leading to its activation is R200.

It belongs to the thymidylate synthase ThyX family. Homotetramer. It depends on FAD as a cofactor.

It carries out the reaction dUMP + (6R)-5,10-methylene-5,6,7,8-tetrahydrofolate + NADPH + H(+) = dTMP + (6S)-5,6,7,8-tetrahydrofolate + NADP(+). The protein operates within pyrimidine metabolism; dTTP biosynthesis. Catalyzes the reductive methylation of 2'-deoxyuridine-5'-monophosphate (dUMP) to 2'-deoxythymidine-5'-monophosphate (dTMP) while utilizing 5,10-methylenetetrahydrofolate (mTHF) as the methyl donor, and NADPH and FADH(2) as the reductant. The sequence is that of Flavin-dependent thymidylate synthase from Streptomyces coelicolor (strain ATCC BAA-471 / A3(2) / M145).